Reading from the N-terminus, the 366-residue chain is Dehydrogenase aclE (366 aa).

The N-terminal stretch at 1–19 (MSKRIRLGIVGLSADPSHC) is a signal peptide. A glycan (N-linked (GlcNAc...) asparagine) is linked at asparagine 330.

The protein belongs to the Gfo/Idh/MocA family.

It participates in mycotoxin biosynthesis. In terms of biological role, dehydrogenase; part of the gene cluster that mediates the biosynthesis of aspirochlorine (or antibiotic A30641), an unusual halogenated spiro compound with distinctive antifungal properties due to selective inhibition of protein biosynthesis, and which is also active against bacteria, viruses, and murine tumor cells. The non-ribosomal peptide synthetase (NRPS) aclP is responsible the formation of the diketopiperazine (DKP) core from the condensation of 2 phenylalanine residues. One Phe residue is tailored into chlorotyrosine by hydroxylation and chlorination, whereas the second Phe undergoes an unprecedented C-C bond cleavage to be converted into glycine. After formation of the DKP, sulfur is incorporated into the DKP by conjugation with glutathione by aclG, followed by its stepwise degradation to the thiol by aclI, aclJ and aclK, and the dithiol oxidation by aclT. In addition, oxygenases (aclB, aclC, aclL and aclO) and O-methyltransferases (aclM and aclU) act as tailoring enzymes to produce the intermediate dechloroaspirochlorine. Ultimately, chlorination of dechloroaspirochlorine by the halogenase aclH is the last step in the aspirochlorine pathway. The sequence is that of Dehydrogenase aclE from Aspergillus oryzae (strain ATCC 42149 / RIB 40) (Yellow koji mold).